Consider the following 74-residue polypeptide: High-potential iron-sulfur protein isozyme 2 (74 aa).

The [4Fe-4S] cluster site is built by C36, C39, C53, and C67.

In terms of assembly, homodimer.

Functionally, specific class of high-redox-potential 4Fe-4S ferredoxins. Functions in anaerobic electron transport in most purple and in some other photosynthetic bacteria and in at least one genus (Paracoccus) of halophilic, denitrifying bacteria. The chain is High-potential iron-sulfur protein isozyme 2 from Ectothiorhodospira mobilis.